A 262-amino-acid polypeptide reads, in one-letter code: Hydroxyethylthiazole kinase (262 aa).

Met43 is a binding site for substrate. ATP-binding residues include Arg118 and Thr164. Position 191 (Ala191) interacts with substrate.

Belongs to the Thz kinase family. Requires Mg(2+) as cofactor.

It carries out the reaction 5-(2-hydroxyethyl)-4-methylthiazole + ATP = 4-methyl-5-(2-phosphooxyethyl)-thiazole + ADP + H(+). The protein operates within cofactor biosynthesis; thiamine diphosphate biosynthesis; 4-methyl-5-(2-phosphoethyl)-thiazole from 5-(2-hydroxyethyl)-4-methylthiazole: step 1/1. Functionally, catalyzes the phosphorylation of the hydroxyl group of 4-methyl-5-beta-hydroxyethylthiazole (THZ). The protein is Hydroxyethylthiazole kinase of Cereibacter sphaeroides (strain ATCC 17023 / DSM 158 / JCM 6121 / CCUG 31486 / LMG 2827 / NBRC 12203 / NCIMB 8253 / ATH 2.4.1.) (Rhodobacter sphaeroides).